Reading from the N-terminus, the 362-residue chain is 3-dehydroquinate synthase (362 aa).

This sequence belongs to the archaeal-type DHQ synthase family.

The catalysed reaction is 2-amino-2,3,7-trideoxy-D-lyxo-hept-6-ulosonate + NAD(+) + H2O = 3-dehydroquinate + NH4(+) + NADH + H(+). Functionally, catalyzes the oxidative deamination and cyclization of 2-amino-3,7-dideoxy-D-threo-hept-6-ulosonic acid (ADH) to yield 3-dehydroquinate (DHQ), which is fed into the canonical shikimic pathway of aromatic amino acid biosynthesis. In Methanothrix thermoacetophila (strain DSM 6194 / JCM 14653 / NBRC 101360 / PT) (Methanosaeta thermophila), this protein is 3-dehydroquinate synthase.